The primary structure comprises 298 residues: uncharacterized protein (298 aa).

It to M.tuberculosis Rv1486c, M.bovis Mb1522c and M.avium MAV321.

This is an uncharacterized protein from Mycobacterium leprae (strain TN).